A 723-amino-acid polypeptide reads, in one-letter code: Vacuolar protein sorting-associated protein 52 homolog (723 aa).

Position 2 is an N-acetylalanine (alanine 2). Coiled coils occupy residues 107–127 and 194–215; these read ENIA…ERME and RFLE…QEAR. Serine 355 bears the Phosphoserine mark.

Belongs to the VPS52 family. Component of the Golgi-associated retrograde protein (GARP) complex, also called VFT (VPS fifty-three) complex, composed of VPS51, VPS52, VPS53 and VPS54. Component of the endosome-associated retrograde protein (EARP) complex, composed of VPS51, VPS52, VPS53 and VPS50/Syndetin. EIPR1 interacts with both EARP and GARP complexes and mediates the recruitment of the GARP complex to the trans-Golgi network. Interacts with RAB6A and STX10. Interacts with BLTP3B.

The protein localises to the golgi apparatus. It localises to the trans-Golgi network membrane. The protein resides in the endosome membrane. It is found in the recycling endosome. Acts as a component of the GARP complex that is involved in retrograde transport from early and late endosomes to the trans-Golgi network (TGN). The GARP complex is required for the maintenance of the cycling of mannose 6-phosphate receptors between the TGN and endosomes, this cycling is necessary for proper lysosomal sorting of acid hydrolases such as CTSD. Acts as a component of the EARP complex that is involved in endocytic recycling. The EARP complex associates with Rab4-positive endosomes and promotes recycling of internalized transferrin receptor (TFRC) to the plasma membrane. The sequence is that of Vacuolar protein sorting-associated protein 52 homolog (VPS52) from Homo sapiens (Human).